A 642-amino-acid chain; its full sequence is MDLGEIEKDFTKIDEYFFDACNIKSYNYNGTYYCCKNISSTHFTKLMYLIINEKNSTNGHQKIIKYLKKKINVKNPSRINRQNDEGWTALMIASITCGQWCSIETVRLLLEHGANPNIQEKNGLQLSGIKSQLAHIISLICKTMRQKNSNPENGFTALSLACAVLDTGESVEVVELLLKYGTNVDSINHNGETALIITCQNSKYFHSIFVIDLLLQNNANTLHKDNNGFTALIHAVSHCPLNIVKLLVKNGSDVNATDNEGKSVLMHSTKNSIDIVKYLLKKGAEINHKNNNDINVLFFASKNHVKSDVIMFLLAKCSNPNEINTNKNAVLAHVCRQFNHHKNDIDTVKILLENRANPNIIDDDSRTILMDICTDYQNENSLDIIEMLLKKGANVNATDIEGRTALNYACMSINNKITIKIIKLLLKYNINVNHVDNDGAHILIDLCRNYSRYSLKVVKLLLEHGADVNITFGNKKWTPLFFANENLFSSSEKDPERCTKLIDLLIHYGANVNAVGKYGNNILMEDTTRNLECPNSITKHLLEKKINVNHQNDNGDTSLLLVYERHELERAYSIAQFLLEHGCNPNIINKNEHNILTILNNDIFWNFEKVIPHFKLFLNYNFNPNIYQIYGCHFILINVLLI.

14 ANK repeats span residues 42-76 (HFTK…VKNP), 85-118 (EGWT…NPNI), 153-186 (NGFT…NVDS), 190-224 (NGET…TLHK), 227-256 (NGFT…DVNA), 260-288 (EGKS…EINH), 292-322 (NDIN…NPNE), 326-360 (NKNA…NPNI), 365-397 (SRTI…NVNA), 401-434 (EGRT…NVNH), 438-470 (DGAH…DVNI), 475-514 (KKWT…NVNA), 518-550 (YGNN…NVNH), and 554-587 (NGDT…NPNI).

In Acanthamoeba polyphaga (Amoeba), this protein is Putative ankyrin repeat protein L91.